A 136-amino-acid chain; its full sequence is MDRTIDDPVEASENDWRSKLTPEQFRITREGGTERAFTGAYWNHKGDGMYRCICCGAELFRSDRKFDSGTGWPSFWEGVNPEAIRTIQDVSHGMVRTEIRCAKCDSHLGHVFQDSPTPTGLRYCVNSASLDFKDKT.

In terms of domain architecture, MsrB spans 13 to 135; it reads ENDWRSKLTP…NSASLDFKDK (123 aa). The Zn(2+) site is built by Cys-52, Cys-55, Cys-101, and Cys-104. Catalysis depends on Cys-124, which acts as the Nucleophile.

Belongs to the MsrB Met sulfoxide reductase family. Zn(2+) is required as a cofactor.

It carries out the reaction L-methionyl-[protein] + [thioredoxin]-disulfide + H2O = L-methionyl-(R)-S-oxide-[protein] + [thioredoxin]-dithiol. This Synechococcus sp. (strain RCC307) protein is Peptide methionine sulfoxide reductase MsrB.